The chain runs to 280 residues: tRNA (guanine-N(1)-)-methyltransferase (280 aa).

Positions 71–94 (DDVSSGTASTQDLQSALPHLSKPR) are disordered. Residues 74–84 (SSGTASTQDLQ) show a composition bias toward polar residues. Residues Gly-146 and 170–175 (IGDYVL) contribute to the S-adenosyl-L-methionine site.

This sequence belongs to the RNA methyltransferase TrmD family. In terms of assembly, homodimer.

Its subcellular location is the cytoplasm. It carries out the reaction guanosine(37) in tRNA + S-adenosyl-L-methionine = N(1)-methylguanosine(37) in tRNA + S-adenosyl-L-homocysteine + H(+). Its function is as follows. Specifically methylates guanosine-37 in various tRNAs. In Corynebacterium aurimucosum (strain ATCC 700975 / DSM 44827 / CIP 107346 / CN-1) (Corynebacterium nigricans), this protein is tRNA (guanine-N(1)-)-methyltransferase.